Reading from the N-terminus, the 582-residue chain is Zinc finger protein somi-1 (582 aa).

Disordered regions lie at residues 179–251 (LRPE…NNTD) and 352–377 (SAEP…KKEQ). The span at 188 to 226 (TQKSTNGVHRSTSNSSAETLRNNSVSAATVSPSDDNSLN) shows a compositional bias: polar residues. Over residues 227-244 (SPALTSSGSAGSGTPPLG) the composition is skewed to low complexity. A compositionally biased stretch (basic and acidic residues) spans 352 to 368 (SAEPMKRHRVEAHEKQS). The C2H2-type; Degenerate zinc-finger motif lies at 454–477 (YICEDCDFVTVYKGNMKRHLNTCH). The interval 513–582 (AHKANSSRGR…PPPPPPPMLL (70 aa)) is disordered. The segment covering 551–570 (LLESLASSSSSMGGYSNGNN) has biased composition (low complexity). Residues 572–582 (QPPPPPPPMLL) are compositionally biased toward pro residues.

As to quaternary structure, may interact with swsn-9; the interaction promotes hypodermal differentiation. In terms of tissue distribution, expressed in hypodermal seam cells, the somatic gonad and vulval precursor cells, body wall muscle and head neurons.

The protein localises to the nucleus. DNA-binding protein which binds to the promoters of let-60, lin-14 and lin-28, possibly to regulate genes involved in hypodermal and vulval development. Together with miRNAs mir-84 and let-7 may direct terminal differentiation of the seam cells, exit from the molting cycle, and vulva formation. Does not regulate the expression of mir-84. May promote hypodermal differentiation in association with swsn-9, a component of SWI/SNF chromatin remodeling complexes. The chain is Zinc finger protein somi-1 from Caenorhabditis elegans.